The sequence spans 486 residues: ATP synthase subunit beta (486 aa).

Position 164 to 171 (164 to 171 (GGAGVGKT)) interacts with ATP.

It belongs to the ATPase alpha/beta chains family. As to quaternary structure, F-type ATPases have 2 components, CF(1) - the catalytic core - and CF(0) - the membrane proton channel. CF(1) has five subunits: alpha(3), beta(3), gamma(1), delta(1), epsilon(1). CF(0) has four main subunits: a(1), b(1), b'(1) and c(9-12).

The protein resides in the cellular thylakoid membrane. The enzyme catalyses ATP + H2O + 4 H(+)(in) = ADP + phosphate + 5 H(+)(out). Produces ATP from ADP in the presence of a proton gradient across the membrane. The catalytic sites are hosted primarily by the beta subunits. This chain is ATP synthase subunit beta, found in Prochlorococcus marinus subsp. pastoris (strain CCMP1986 / NIES-2087 / MED4).